A 112-amino-acid polypeptide reads, in one-letter code: Photosystem II reaction center Psb28 protein (112 aa).

This sequence belongs to the Psb28 family. Part of the photosystem II complex.

It is found in the cellular thylakoid membrane. This is Photosystem II reaction center Psb28 protein from Synechococcus elongatus (strain ATCC 33912 / PCC 7942 / FACHB-805) (Anacystis nidulans R2).